The following is a 289-amino-acid chain: Pseudouridine-5'-phosphate glycosidase (289 aa).

Glu-10 acts as the Proton donor in catalysis. Positions 71 and 91 each coordinate substrate. Residue Asp-121 coordinates Mn(2+). 123 to 125 (SQD) contributes to the substrate binding site. Catalysis depends on Lys-142, which acts as the Nucleophile.

Belongs to the pseudouridine-5'-phosphate glycosidase family. In terms of assembly, homotrimer. The cofactor is Mn(2+).

It catalyses the reaction D-ribose 5-phosphate + uracil = psi-UMP + H2O. Catalyzes the reversible cleavage of pseudouridine 5'-phosphate (PsiMP) to ribose 5-phosphate and uracil. Functions biologically in the cleavage direction, as part of a pseudouridine degradation pathway. The protein is Pseudouridine-5'-phosphate glycosidase of Kosmotoga olearia (strain ATCC BAA-1733 / DSM 21960 / TBF 19.5.1).